The primary structure comprises 24 residues: Brevinin-1Bb (24 aa).

C18 and C24 are disulfide-bonded.

As to expression, expressed by the skin glands.

It is found in the secreted. Functionally, antibacterial activity against Gram-positive bacterium S.aureus and Gram-negative bacterium E.coli. Has activity against C.albicans. This chain is Brevinin-1Bb, found in Lithobates berlandieri (Rio Grande leopard frog).